The chain runs to 350 residues: Uroporphyrinogen decarboxylase (350 aa).

Residues 28–32 (RQAGR), aspartate 78, tyrosine 155, serine 210, and histidine 325 each bind substrate.

The protein belongs to the uroporphyrinogen decarboxylase family. Homodimer.

It is found in the cytoplasm. It catalyses the reaction uroporphyrinogen III + 4 H(+) = coproporphyrinogen III + 4 CO2. The protein operates within porphyrin-containing compound metabolism; protoporphyrin-IX biosynthesis; coproporphyrinogen-III from 5-aminolevulinate: step 4/4. In terms of biological role, catalyzes the decarboxylation of four acetate groups of uroporphyrinogen-III to yield coproporphyrinogen-III. The sequence is that of Uroporphyrinogen decarboxylase from Picosynechococcus sp. (strain ATCC 27264 / PCC 7002 / PR-6) (Agmenellum quadruplicatum).